The primary structure comprises 178 residues: Adenine phosphoribosyltransferase (178 aa).

The protein belongs to the purine/pyrimidine phosphoribosyltransferase family. Homodimer.

It is found in the cytoplasm. The enzyme catalyses AMP + diphosphate = 5-phospho-alpha-D-ribose 1-diphosphate + adenine. The protein operates within purine metabolism; AMP biosynthesis via salvage pathway; AMP from adenine: step 1/1. In terms of biological role, catalyzes a salvage reaction resulting in the formation of AMP, that is energically less costly than de novo synthesis. This chain is Adenine phosphoribosyltransferase, found in Bacteroides fragilis (strain ATCC 25285 / DSM 2151 / CCUG 4856 / JCM 11019 / LMG 10263 / NCTC 9343 / Onslow / VPI 2553 / EN-2).